The primary structure comprises 267 residues: Outer membrane protein assembly factor BamD (267 aa).

Positions 1-16 (MKKILLTVSLGLALSA) are cleaved as a signal peptide. The N-palmitoyl cysteine moiety is linked to residue Cys17. A lipid anchor (S-diacylglycerol cysteine) is attached at Cys17.

This sequence belongs to the BamD family. In terms of assembly, part of the Bam complex.

The protein localises to the cell outer membrane. Part of the outer membrane protein assembly complex, which is involved in assembly and insertion of beta-barrel proteins into the outer membrane. Required for efficient transformation of Neisseria meningitidis by species-related DNA. The sequence is that of Outer membrane protein assembly factor BamD from Neisseria meningitidis serogroup B (strain ATCC BAA-335 / MC58).